Here is a 90-residue protein sequence, read N- to C-terminus: Large ribosomal subunit protein bL27 (90 aa).

Residues 1 to 21 (MAHTKAGGTTRNSRDSAGRRL) are disordered.

Belongs to the bacterial ribosomal protein bL27 family.

The chain is Large ribosomal subunit protein bL27 from Metamycoplasma arthritidis (strain 158L3-1) (Mycoplasma arthritidis).